Here is a 141-residue protein sequence, read N- to C-terminus: Large ribosomal subunit protein uL11 (141 aa).

The protein belongs to the universal ribosomal protein uL11 family. As to quaternary structure, part of the ribosomal stalk of the 50S ribosomal subunit. Interacts with L10 and the large rRNA to form the base of the stalk. L10 forms an elongated spine to which L12 dimers bind in a sequential fashion forming a multimeric L10(L12)X complex. One or more lysine residues are methylated.

Forms part of the ribosomal stalk which helps the ribosome interact with GTP-bound translation factors. This chain is Large ribosomal subunit protein uL11, found in Prochlorococcus marinus (strain MIT 9312).